The following is an 857-amino-acid chain: DNA mismatch repair protein MutS (857 aa).

608-615 is a binding site for ATP; that stretch reads GPNMSGKS.

Belongs to the DNA mismatch repair MutS family.

In terms of biological role, this protein is involved in the repair of mismatches in DNA. It is possible that it carries out the mismatch recognition step. This protein has a weak ATPase activity. The sequence is that of DNA mismatch repair protein MutS from Lacticaseibacillus casei (strain BL23) (Lactobacillus casei).